A 757-amino-acid chain; its full sequence is Endosialin (757 aa).

The N-terminal stretch at 1–17 is a signal peptide; the sequence is MLLRLLLAWAAAGPTLG. Topologically, residues 18-687 are extracellular; it reads QDPWAAEPRA…EHSQRDDRWL (670 aa). Residues 30–156 form the C-type lectin domain; the sequence is GPSSCYALFP…CTLAVDGYLC (127 aa). O-linked (GalNAc...) threonine glycosylation is present at T60. The cysteines at positions 131 and 147 are disulfide-linked. The 71-residue stretch at 162 to 232 folds into the Sushi domain; sequence GACPALQDEA…WSRAGPLCLG (71 aa). Residues 312 to 351 form the EGF-like; calcium-binding domain; it reads DTDECQIAGVCQQMCVNYVGGFECYCSEGHELEADGISCS. 3 disulfides stabilise this stretch: C316-C326, C322-C335, and C337-C350. O-linked (GalNAc...) threonine glycosylation is found at T401, T428, T448, T456, T459, T472, T519, T541, T543, T544, T545, T587, T593, T594, and T595. 2 O-linked (GalNAc...) serine glycosylation sites follow: S598 and S601. Residues T612 and T619 are each glycosylated (O-linked (GalNAc...) threonine). A compositionally biased stretch (low complexity) spans 618-627; the sequence is PTLLPSQSPT. The tract at residues 618-662 is disordered; that stretch reads PTLLPSQSPTNQTSPISPTHPHSKAPQIPREDGPSPKLALWLPSP. Residues S623 and S625 are each glycosylated (O-linked (GalNAc...) serine). T627 and T630 each carry an O-linked (GalNAc...) threonine glycan. S631 carries O-linked (GalNAc...) serine glycosylation. O-linked (GalNAc...) threonine glycosylation occurs at T636. A glycan (O-linked (GalNAc...) serine) is linked at S640. Residues 688–708 form a helical membrane-spanning segment; it reads LVALLVPTCVFLVVLLALGIV. The Cytoplasmic portion of the chain corresponds to 709-757; that stretch reads YCTRCGPHAPNKRITDCYRWVIHAGSKSPTEPMPPRGSLTGVQTCRTSV. The tract at residues 737 to 757 is disordered; that stretch reads PTEPMPPRGSLTGVQTCRTSV. The residue at position 746 (S746) is a Phosphoserine. The segment covering 748–757 has biased composition (polar residues); it reads TGVQTCRTSV.

As to quaternary structure, interacts with PDGFRA; this interaction promotes PDGF receptor signaling pathway. Interacts with integrin beta-1/ITGB1. Interacts with insulin receptor/INSR; this interaction diminishes INSR autophosphorylation. Post-translationally, O-glycosylated with sialylated oligosaccharides. May be N-glycosylated. In terms of tissue distribution, expressed in tumor endothelial cells but absent or barely detectable in normal endothelial cells. Expressed in metastatic lesions of the liver and during angiogenesis of corpus luteum formation and wound healing. Expressed in vascular endothelial cells of malignant tumors but not in normal blood vessels. Expressed in stromal fibroblasts. Strongly expressed in pericytes. Expressed on stromal cells and cells with lymphoid morphology such a T-cells.

The protein resides in the membrane. Functionally, cell surface glycoprotein involved in various biological processes including angiogenesis, immune response modulation, and tissue remodeling and repair. Participates in pericyte proliferation through positive modulation of the PDGF receptor signaling pathway. Acts as a scaffold for factor X, triggering allosteric changes and the spatial re-alignment of factor X with the TF-factor VIIa complex, thereby enhancing coagulation activation. Modulates the insulin signaling pathway by interacting with insulin receptor/INSR and by diminishing its capacity to be autophosphorylated in response to insulin. Also regulates LPS-induced inflammatory response in macrophages by favoring the production of proinflammatory cytokines. In human, negatively regulates T-cell proliferation compared with stromal cells where it increases proliferation. The polypeptide is Endosialin (CD248) (Homo sapiens (Human)).